Consider the following 110-residue polypeptide: Acylphosphatase (110 aa).

An Acylphosphatase-like domain is found at 24–110 (RVRVYVSGRV…SGGARGFEVR (87 aa)). Residues Arg-39 and Asn-57 contribute to the active site.

This sequence belongs to the acylphosphatase family.

The catalysed reaction is an acyl phosphate + H2O = a carboxylate + phosphate + H(+). The chain is Acylphosphatase (acyP) from Rubrobacter xylanophilus (strain DSM 9941 / JCM 11954 / NBRC 16129 / PRD-1).